Here is a 122-residue protein sequence, read N- to C-terminus: Large ribosomal subunit protein uL14 (122 aa).

This sequence belongs to the universal ribosomal protein uL14 family. Part of the 50S ribosomal subunit. Forms a cluster with proteins L3 and L19. In the 70S ribosome, L14 and L19 interact and together make contacts with the 16S rRNA in bridges B5 and B8.

In terms of biological role, binds to 23S rRNA. Forms part of two intersubunit bridges in the 70S ribosome. This Chlorobium chlorochromatii (strain CaD3) protein is Large ribosomal subunit protein uL14.